A 373-amino-acid polypeptide reads, in one-letter code: Putative gustatory receptor 10b (373 aa).

Over 1–8 (MRVGKLCR) the chain is Cytoplasmic. The helical transmembrane segment at 9–29 (LALRFWMGLILVLGFSSHYYN) threads the bilayer. The Extracellular portion of the chain corresponds to 30–82 (PTRRRLVYSRILQTYDWLLMVINLGAFYLYYRYAMTYFLEGMFRRQGFVNQVS). Residues 83-103 (TCNVFQQLLMAVTGTWLHFLF) traverse the membrane as a helical segment. The Cytoplasmic segment spans residues 104–132 (ERHVCQTYNELSRILKHDLKLKEHSRFYC). The helical transmembrane segment at 133 to 153 (LAFLAKVYNFFHNFNFALSAI) threads the bilayer. At 154 to 170 (MHWGLRPFNVWDLLANL) the chain is on the extracellular side. The helical transmembrane segment at 171–191 (YFVYNSLARDAILVAYVLLLL) threads the bilayer. The Cytoplasmic segment spans residues 192 to 230 (NLSEALRLNGQQEHDTYSDLMKQLRRRERLLRIGRRVHR). A helical membrane pass occupies residues 231–251 (MFAWLVAIALIYLVFFNTATI). The Extracellular portion of the chain corresponds to 252–273 (YLGYTMFIQKHDALGLRGRGLK). The chain crosses the membrane as a helical span at residues 274-294 (MLLTVVSFLVILWDVVLLQVI). Residues 295–350 (CEKLLAEENKICDCPEDVASSRTTYRQWEMSALRRAITRSSPENNVLGMFRMDMRC) lie on the Cytoplasmic side of the membrane. A helical membrane pass occupies residues 351-371 (AFALISCSLSYGIIIIQIGYI). At 372 to 373 (PG) the chain is on the extracellular side.

This sequence belongs to the insect chemoreceptor superfamily. Gustatory receptor (GR) family. Gr10a subfamily.

It is found in the cell membrane. Functionally, probable gustatory receptor which mediates acceptance or avoidance behavior, depending on its substrates. The chain is Putative gustatory receptor 10b (Gr10b) from Drosophila melanogaster (Fruit fly).